The primary structure comprises 306 residues: Pantothenate kinase (306 aa).

91–98 (GSVAVGKS) lines the ATP pocket.

It belongs to the prokaryotic pantothenate kinase family.

It localises to the cytoplasm. The catalysed reaction is (R)-pantothenate + ATP = (R)-4'-phosphopantothenate + ADP + H(+). It participates in cofactor biosynthesis; coenzyme A biosynthesis; CoA from (R)-pantothenate: step 1/5. This chain is Pantothenate kinase (coaA), found in Streptococcus pneumoniae serotype 4 (strain ATCC BAA-334 / TIGR4).